The following is an 800-amino-acid chain: Protocadherin beta-10 (800 aa).

The N-terminal stretch at 1-26 (MAVRELCFPRQRQVLFLFLFWGVSLA) is a signal peptide. The Extracellular segment spans residues 27 to 692 (GSGFGRYSVT…AEADLLTVYL (666 aa)). Cadherin domains follow at residues 35 to 133 (VTEE…APVF), 138 to 242 (TVLK…APQF), 247 to 347 (YETQ…PPEL), 352 to 451 (FSNS…APAF), and 456 to 561 (YTLF…SPFV). N-linked (GlcNAc...) asparagine glycans are attached at residues Asn169 and Asn181. Asn418 and Asn436 each carry an N-linked (GlcNAc...) asparagine glycan. An N-linked (GlcNAc...) asparagine glycan is attached at Asn567. One can recognise a Cadherin 6 domain in the interval 568-671 (GSAPCTELVP…LVDGFSQPYL (104 aa)). The helical transmembrane segment at 693-713 (VVALASVSSLFLLSVLLFVAV) threads the bilayer. Residues 714-800 (RLCRRSRAAS…FRNSFGFNIQ (87 aa)) lie on the Cytoplasmic side of the membrane.

Its subcellular location is the cell membrane. Potential calcium-dependent cell-adhesion protein. May be involved in the establishment and maintenance of specific neuronal connections in the brain. The protein is Protocadherin beta-10 (PCDHB10) of Homo sapiens (Human).